The sequence spans 619 residues: Phosphomethylpyrimidine synthase (619 aa).

Over residues 93 to 104 (IKPEDNGLKGPD) the composition is skewed to basic and acidic residues. Residues 93-114 (IKPEDNGLKGPDRSGGVTPFPN) are disordered. Substrate contacts are provided by residues asparagine 217, methionine 246, tyrosine 275, histidine 311, 331–333 (SRG), 372–375 (DGLR), and glutamate 411. Residue histidine 415 participates in Zn(2+) binding. Substrate is bound at residue tyrosine 438. Histidine 479 is a binding site for Zn(2+). The [4Fe-4S] cluster site is built by cysteine 559, cysteine 562, and cysteine 567.

It belongs to the ThiC family. Homodimer. It depends on [4Fe-4S] cluster as a cofactor.

It catalyses the reaction 5-amino-1-(5-phospho-beta-D-ribosyl)imidazole + S-adenosyl-L-methionine = 4-amino-2-methyl-5-(phosphooxymethyl)pyrimidine + CO + 5'-deoxyadenosine + formate + L-methionine + 3 H(+). It functions in the pathway cofactor biosynthesis; thiamine diphosphate biosynthesis. In terms of biological role, catalyzes the synthesis of the hydroxymethylpyrimidine phosphate (HMP-P) moiety of thiamine from aminoimidazole ribotide (AIR) in a radical S-adenosyl-L-methionine (SAM)-dependent reaction. The chain is Phosphomethylpyrimidine synthase from Rhizorhabdus wittichii (strain DSM 6014 / CCUG 31198 / JCM 15750 / NBRC 105917 / EY 4224 / RW1) (Sphingomonas wittichii).